Reading from the N-terminus, the 346-residue chain is Eukaryotic translation initiation factor 3 subunit I (346 aa).

5 WD repeats span residues 8-47 (GHER…RLGT), 50-89 (GHNG…IAHS), 150-189 (EGCA…CLEI), 192-233 (LHKQ…KTYE), and 289-328 (DHFG…FDFK).

This sequence belongs to the eIF-3 subunit I family. Component of the eukaryotic translation initiation factor 3 (eIF-3) complex.

Its subcellular location is the cytoplasm. Its function is as follows. Component of the eukaryotic translation initiation factor 3 (eIF-3) complex, which is involved in protein synthesis of a specialized repertoire of mRNAs and, together with other initiation factors, stimulates binding of mRNA and methionyl-tRNAi to the 40S ribosome. The eIF-3 complex specifically targets and initiates translation of a subset of mRNAs involved in cell proliferation. This is Eukaryotic translation initiation factor 3 subunit I from Eremothecium gossypii (strain ATCC 10895 / CBS 109.51 / FGSC 9923 / NRRL Y-1056) (Yeast).